The chain runs to 279 residues: Ribosomal RNA small subunit methyltransferase J (279 aa).

S-adenosyl-L-methionine is bound by residues 138–139 (ER) and D194.

The protein belongs to the methyltransferase superfamily. RsmJ family.

It is found in the cytoplasm. The enzyme catalyses guanosine(1516) in 16S rRNA + S-adenosyl-L-methionine = N(2)-methylguanosine(1516) in 16S rRNA + S-adenosyl-L-homocysteine + H(+). Its function is as follows. Specifically methylates the guanosine in position 1516 of 16S rRNA. The protein is Ribosomal RNA small subunit methyltransferase J of Acinetobacter baumannii (strain SDF).